Consider the following 453-residue polypeptide: Putative ABC transporter ATP-binding protein MM_0462 (453 aa).

The 236-residue stretch at 4-239 (LETRSLKYSY…QELLKKVGLR (236 aa)) folds into the ABC transporter domain. ATP is bound at residue 37–44 (GQNGSGKS).

This sequence belongs to the ABC transporter superfamily.

The protein resides in the cell membrane. Functionally, probably part of an ABC transporter complex. Responsible for energy coupling to the transport system. The polypeptide is Putative ABC transporter ATP-binding protein MM_0462 (Methanosarcina mazei (strain ATCC BAA-159 / DSM 3647 / Goe1 / Go1 / JCM 11833 / OCM 88) (Methanosarcina frisia)).